The primary structure comprises 140 residues: Blasticidin-S deaminase (140 aa).

The CMP/dCMP-type deaminase domain occupies Gln8 to Asn140. Cys59 lines the Zn(2+) pocket. Catalysis depends on Glu61, which acts as the Proton donor. The Zn(2+) site is built by Cys100 and Cys103.

Belongs to the cytidine and deoxycytidylate deaminase family. It depends on Zn(2+) as a cofactor.

The enzyme catalyses blasticidin S + H2O + H(+) = deaminohydroxyblasticidin S + NH4(+). Functionally, catalyzes the deamination of the cytosine moiety of the antibiotics blasticidin S, cytomycin and acetylblasticidin S. This is Blasticidin-S deaminase (bsr) from Bacillus cereus.